A 169-amino-acid polypeptide reads, in one-letter code: Methanogen homoaconitase small subunit (169 aa).

The YLRT motif lies at 27–30 (YLRT).

Belongs to the LeuD family. LeuD type 2 subfamily. Heterotetramer of 2 HacA and 2 HacB proteins.

It carries out the reaction (2R)-homocitrate = (2R,3S)-homoisocitrate. The enzyme catalyses (2R)-homocitrate = cis-homoaconitate + H2O. It catalyses the reaction (2R,3S)-homoisocitrate = cis-homoaconitate + H2O. The catalysed reaction is cis-(homo)2aconitate + H2O = (2R,3S)-iso(homo)2citrate. It carries out the reaction cis-(homo)3aconitate + H2O = (2R,3S)-iso(homo)3citrate. It functions in the pathway organic acid metabolism; 2-oxosuberate biosynthesis. In terms of biological role, component of a hydro-lyase with broad substrate specificity for cis-unsaturated tricarboxylic acids. Catalyzes both the reversible dehydration of (R)-homocitrate ((R)-2-hydroxybutane-1,2,4-tricarboxylate) to produce cis-homoaconitate ((Z)-but-1-ene-1,2,4-tricarboxylate), and its hydration to homoisocitrate ((1R,2S)-1-hydroxybutane-1,2,4-tricarboxylate). Is also able to hydrate the analogous longer chain substrates cis-homo(2)-aconitate, cis-homo(3)-aconitate. These reactions are part of the biosynthesis pathway of coenzyme B. The protein is Methanogen homoaconitase small subunit (hacB) of Methanosarcina mazei (strain ATCC BAA-159 / DSM 3647 / Goe1 / Go1 / JCM 11833 / OCM 88) (Methanosarcina frisia).